The primary structure comprises 287 residues: T-cell ecto-ADP-ribosyltransferase 1 (287 aa).

Residues 1–20 (MPSNNFKFFLTWWLTQQVTG) form the signal peptide. 3 cysteine pairs are disulfide-bonded: Cys41/Cys246, Cys80/Cys201, and Cys141/Cys193. The 181-residue stretch at 61–241 (EELKLEWEKA…ISLDSPKRKK (181 aa)) folds into the TR mART core domain. NAD(+)-binding residues include Tyr98 and Arg146. Residues Arg146 and Ser167 contribute to the active site. Asn171 carries N-linked (GlcNAc...) asparagine glycosylation. Position 202 (Ser202) interacts with NAD(+). Residue Glu209 is part of the active site. Asn256 carries N-linked (GlcNAc...) asparagine glycosylation. Ser258 carries GPI-anchor amidated serine lipidation. Residues 259–287 (SLGSRESCVSLFLVVLLGLLVQQLTLAEP) constitute a propeptide, removed in mature form.

Belongs to the Arg-specific ADP-ribosyltransferase family. It is proposed that in the absence of reducing agents, a disulfide bond is formed between Cys-80 and Cys-201, leading to a conformational change that reduces the catalytic rate of NAD glycohydrolysis. In terms of tissue distribution, expressed in spleen, intestine and thymus.

The protein localises to the cell membrane. It catalyses the reaction L-arginyl-[protein] + NAD(+) = N(omega)-(ADP-D-ribosyl)-L-arginyl-[protein] + nicotinamide + H(+). The enzyme catalyses NAD(+) + H2O = ADP-D-ribose + nicotinamide + H(+). Functionally, has both ADP-ribosyltransferase activity and thiol-dependent NAD(+) glycohydrolase activity. The chain is T-cell ecto-ADP-ribosyltransferase 1 (Art2a) from Mus musculus (Mouse).